Reading from the N-terminus, the 320-residue chain is ATP-dependent 6-phosphofructokinase (320 aa).

Residue G12 coordinates ATP. ADP is bound by residues 22 to 26 and 55 to 60; these read RGVVR and RYSVSD. Residues 73 to 74 and 103 to 106 contribute to the ATP site; these read RF and GDGS. Position 104 (D104) interacts with Mg(2+). 126 to 128 contributes to the substrate binding site; it reads TID. The active-site Proton acceptor is the D128. R155 serves as a coordination point for ADP. Substrate-binding positions include R163 and 170 to 172; that span reads MGR. ADP is bound by residues 186 to 188, K212, and 214 to 216; these read GCE and KKH. Substrate is bound by residues E223, R244, and 250 to 253; that span reads HIQR.

The protein belongs to the phosphofructokinase type A (PFKA) family. ATP-dependent PFK group I subfamily. Prokaryotic clade 'B1' sub-subfamily. As to quaternary structure, homotetramer. Mg(2+) is required as a cofactor.

Its subcellular location is the cytoplasm. The enzyme catalyses beta-D-fructose 6-phosphate + ATP = beta-D-fructose 1,6-bisphosphate + ADP + H(+). Its pathway is carbohydrate degradation; glycolysis; D-glyceraldehyde 3-phosphate and glycerone phosphate from D-glucose: step 3/4. With respect to regulation, allosterically activated by ADP and other diphosphonucleosides, and allosterically inhibited by phosphoenolpyruvate. Functionally, catalyzes the phosphorylation of D-fructose 6-phosphate to fructose 1,6-bisphosphate by ATP, the first committing step of glycolysis. The protein is ATP-dependent 6-phosphofructokinase of Cronobacter sakazakii (strain ATCC BAA-894) (Enterobacter sakazakii).